Here is an 84-residue protein sequence, read N- to C-terminus: Anaphase-promoting complex subunit 11 (84 aa).

Positions 23, 26, 34, 37, 44, 51, 53, 56, 58, 59, 73, and 76 each coordinate Zn(2+). The RING-type zinc finger occupies 34 to 77 (CPDCKVPGDDCPLVWGQCSHCFHMHCILKWLNAQQVQQHCPMCR).

It belongs to the RING-box family. The mammalian APC/C is composed at least of 14 distinct subunits ANAPC1, ANAPC2, CDC27/APC3, ANAPC4, ANAPC5, CDC16/APC6, ANAPC7, CDC23/APC8, ANAPC10, ANAPC11, CDC26/APC12, ANAPC13, ANAPC15 and ANAPC16 that assemble into a complex of at least 19 chains with a combined molecular mass of around 1.2 MDa; APC/C interacts with FZR1 and FBXO5. Interacts with the cullin domain of ANAPC2. Interacts with UBE2D2. Auto-ubiquitinated.

The protein localises to the cytoplasm. Its subcellular location is the nucleus. Its pathway is protein modification; protein ubiquitination. In terms of biological role, together with the cullin protein ANAPC2, constitutes the catalytic component of the anaphase promoting complex/cyclosome (APC/C), a cell cycle-regulated E3 ubiquitin ligase that controls progression through mitosis and the G1 phase of the cell cycle. The APC/C complex acts by mediating ubiquitination and subsequent degradation of target proteins: it mainly mediates the formation of 'Lys-11'-linked polyubiquitin chains and, to a lower extent, the formation of 'Lys-48'- and 'Lys-63'-linked polyubiquitin chains. The APC/C complex catalyzes assembly of branched 'Lys-11'-/'Lys-48'-linked branched ubiquitin chains on target proteins. May recruit the E2 ubiquitin-conjugating enzymes to the complex. This chain is Anaphase-promoting complex subunit 11 (ANAPC11), found in Bos taurus (Bovine).